A 433-amino-acid chain; its full sequence is Shikimate O-hydroxycinnamoyltransferase (433 aa).

His153 serves as the catalytic Proton acceptor. 4-coumaroyl-CoA-binding positions include 252–255 (SSYE), 284–290 (DGRSRLR), and 370–373 (SWVR). Asp380 acts as the Proton acceptor in catalysis.

Belongs to the plant acyltransferase family.

The catalysed reaction is shikimate + 4-coumaroyl-CoA = trans-4-coumaroylshikimate + CoA. Functionally, acyltransferase involved in the biosynthesis of lignin. Accepts caffeoyl-CoA and p-coumaroyl-CoA as substrates and transfers the acyl group on both shikimate and quinate acceptors. The chain is Shikimate O-hydroxycinnamoyltransferase (HST) from Arabidopsis thaliana (Mouse-ear cress).